The following is a 499-amino-acid chain: Cytochrome P450 monooxygenase notH' (499 aa).

Residues 11-31 traverse the membrane as a helical segment; the sequence is LGLEPAGWALALLTSSIIYLF. N-linked (GlcNAc...) asparagine glycosylation is found at asparagine 296 and asparagine 427. Cysteine 440 serves as a coordination point for heme.

This sequence belongs to the cytochrome P450 family. It depends on heme as a cofactor.

The protein resides in the membrane. The protein operates within alkaloid biosynthesis. In terms of biological role, cytochrome P450 monooxygenase; part of the gene cluster that mediates the biosynthesis of notoamide, a fungal indole alkaloid that belongs to a family of natural products containing a characteristic bicyclo[2.2.2]diazaoctane core. The first step of notoamide biosynthesis involves coupling of L-proline and L-tryptophan by the bimodular NRPS notE', to produce cyclo-L-tryptophan-L-proline called brevianamide F. The reverse prenyltransferase notF' then acts as a deoxybrevianamide E synthase and converts brevianamide F to deoxybrevianamide E via reverse prenylation at C-2 of the indole ring leading to the bicyclo[2.2.2]diazaoctane core. Deoxybrevianamide E is further hydroxylated at C-6 of the indole ring, likely catalyzed by the cytochrome P450 monooxygenase notG', to yield 6-hydroxy-deoxybrevianamide E. 6-hydroxy-deoxybrevianamide E is a specific substrate of the prenyltransferase notC' for normal prenylation at C-7 to produce 6-hydroxy-7-prenyl-deoxybrevianamide, also called notoamide S. As the proposed pivotal branching point in notoamide biosynthesis, notoamide S can be diverted to notoamide E through an oxidative pyran ring closure putatively catalyzed by either notH' cytochrome P450 monooxygenase or the notD' FAD-linked oxidoreductase. This step would be followed by an indole 2,3-epoxidation-initiated pinacol-like rearrangement catalyzed by the notB' FAD-dependent monooxygenase leading to the formation of notoamide C and notoamide D. On the other hand notoamide S is converted to notoamide T by notH' (or notD'), a bifunctional oxidase that also functions as the intramolecular Diels-Alderase responsible for generation of (-)-notoamide T. To generate antipodal (+)-notoaminide T, notH (or notD) in Aspergillus strain MF297-2 is expected to catalyze a Diels-Alder reaction leading to the opposite stereochemistry. The remaining oxidoreductase notD' (or notH') likely catalyzes the oxidative pyran ring formation to yield (-)-stephacidin A. The FAD-dependent monooxygenase notI' is highly similar to notB' and is predicted to catalyze a similar conversion from (-)-stephacidin A to (+)-notoamide B via the 2,3-epoxidation of (-)-stephacidin A followed by a pinacol-type rearrangement. Finally, it remains unclear which enzyme could be responsible for the final hydroxylation steps leading to notoamide A and sclerotiamide. The sequence is that of Cytochrome P450 monooxygenase notH' from Aspergillus versicolor.